A 62-amino-acid polypeptide reads, in one-letter code: Large ribosomal subunit protein bL28 (62 aa).

The protein belongs to the bacterial ribosomal protein bL28 family.

This Streptococcus thermophilus (strain CNRZ 1066) protein is Large ribosomal subunit protein bL28.